Consider the following 588-residue polypeptide: Neuropeptide-like 1 (588 aa).

A propeptide spanning residues 1-179 (MQCIPKKTFM…DPEVLEYSPD (179 aa)) is cleaved from the precursor. Residues 115-143 (NGDLPITIQERESDNDDEEKRSASSSDNV) form a disordered region. Residue threonine 194 is modified to Threonine amide. Serine 210, serine 227, and serine 244 each carry serine amide. Position 260 is a tyrosine amide (tyrosine 260). Position 281 is a glutamic acid 1-amide (glutamate 281). Residues 285 to 299 (SIASLARSGDWPSVA) constitute a propeptide that is removed on maturation. A Tyrosine amide modification is found at tyrosine 318. Residues 321 to 588 (SLSDDREAPS…SNSHIAPRSM (268 aa)) constitute a propeptide that is removed on maturation. The disordered stretch occupies residues 342–382 (GNSEGKENEWQATPFTVSEDLDEGKAKNRSNRRIEASQTRH).

The protein localises to the secreted. In Camponotus floridanus (Florida carpenter ant), this protein is Neuropeptide-like 1.